Here is a 789-residue protein sequence, read N- to C-terminus: DEAD-box ATP-dependent RNA helicase 28 (789 aa).

Positions 1-152 (MPSSFFFEDA…AEYKPEDATP (152 aa)) are disordered. Residues 13–66 (DELELIRNQEDSSEEDVKEGEAEEHEAGEDEDGEEEYEEEDDDEEEEDEKRKRD) adopt a coiled-coil conformation. Residues 23–60 (DSSEEDVKEGEAEEHEAGEDEDGEEEYEEEDDDEEEED) are compositionally biased toward acidic residues. The span at 83-99 (GEEHARRHTTSIDEKIS) shows a compositional bias: basic and acidic residues. Residues 110–135 (SINEEEEEEEEEEDASDAETDKQEEY) adopt a coiled-coil conformation. The span at 112 to 127 (NEEEEEEEEEEDASDA) shows a compositional bias: acidic residues. Residues 167–195 (DTFMELNLSRPLLRACETLGYKKPTPIQA) carry the Q motif motif. The Helicase ATP-binding domain occupies 198 to 372 (IPLALTGRDL…KLSLNKPLRL (175 aa)). 211 to 218 (AITGSGKT) lines the ATP pocket. A DEAD box motif is present at residues 320-323 (DEAD). The region spanning 402-546 (VLLSLCTRTF…SRVIPEQSIV (145 aa)) is the Helicase C-terminal domain. Coiled coils occupy residues 563 to 591 (ISAE…HRDE) and 628 to 677 (SADR…EDEE). The segment at 611–789 (AQAEKDSAGN…FKSKARYKRR (179 aa)) is disordered. The span at 628–637 (SADRAEDLKM) shows a compositional bias: basic and acidic residues. Over residues 638 to 656 (KEKRKREREKNLPRKKRRK) the composition is skewed to basic residues. A compositionally biased stretch (acidic residues) spans 665-678 (EDNEGEEEEEDEEG). Basic and acidic residues-rich tracts occupy residues 691–701 (KKQETDKKGLT), 718–734 (RAID…DKKQ), and 743–761 (PRGE…EKKQ). Basic residues predominate over residues 772-789 (PRTKSKNSFKSKARYKRR).

Belongs to the DEAD box helicase family. DDX27/DRS1 subfamily.

It catalyses the reaction ATP + H2O = ADP + phosphate + H(+). This chain is DEAD-box ATP-dependent RNA helicase 28 (RH28), found in Arabidopsis thaliana (Mouse-ear cress).